The chain runs to 236 residues: Ubiquinone biosynthesis O-methyltransferase (236 aa).

4 residues coordinate S-adenosyl-L-methionine: Arg39, Gly59, Asp80, and Met124.

It belongs to the methyltransferase superfamily. UbiG/COQ3 family.

It catalyses the reaction a 3-demethylubiquinol + S-adenosyl-L-methionine = a ubiquinol + S-adenosyl-L-homocysteine + H(+). It carries out the reaction a 3-(all-trans-polyprenyl)benzene-1,2-diol + S-adenosyl-L-methionine = a 2-methoxy-6-(all-trans-polyprenyl)phenol + S-adenosyl-L-homocysteine + H(+). It functions in the pathway cofactor biosynthesis; ubiquinone biosynthesis. Its function is as follows. O-methyltransferase that catalyzes the 2 O-methylation steps in the ubiquinone biosynthetic pathway. The polypeptide is Ubiquinone biosynthesis O-methyltransferase (Shewanella putrefaciens (strain CN-32 / ATCC BAA-453)).